A 503-amino-acid chain; its full sequence is MSDFQLEILKKLDELDEIKSTLATFPQHGSQDVLSALNSLKAHNKLEFSKVDTVTYDLTKEGAQILNEGSYEIKLVKLIQELGQLQIKDVMSKLGPQVGKVGQARAFKNGWIAKNASNELELSAKLQNTDLNELTDETQSILAQIKNNSHLDSIDAKILNDLKKRKLIAQGKITDFNVTKGPEFSTDLTKLETDLTSDMVSTNAYKDLKFKPYNFNSQGVQISSGALHPLNKVREEFRQIFFSMGFTEMPSNQYVETGFWNFDALYVPQQHPARDLQDTFYIKDPLTADLPDDKTYMDNIKAVHEQGRFGSIGYRYNWKPEECQKLVLRTHSTAISARMLHDLAKDPKPTRLFSIDRVFRNEAVDATHLAEFHQVEGVLADYNITLGDLIKFMEEFFERMGVTGLRFKPTYNPYTEPSMEIFSWHEGLQKWVEIGNSGMFRPEMLESMGLPKDLRVLGWGLSLERPTMIKYKVQNIRELLGHKVSLDFIETNPAARLDEDLYE.

Ser-2 carries the N-acetylserine modification. The tract at residues 2-173 (SDFQLEILKK…KRKLIAQGKI (172 aa)) is contains the major tRNA-Phe binding sites. L-phenylalanine is bound by residues Thr-333, 374–376 (QVE), and Tyr-414. Glu-416 lines the Mg(2+) pocket. Phe-440 is a binding site for L-phenylalanine.

It belongs to the class-II aminoacyl-tRNA synthetase family. Phe-tRNA synthetase alpha subunit type 2 subfamily. In terms of assembly, tetramer of two alpha and two beta subunits. Requires Mg(2+) as cofactor.

Its subcellular location is the cytoplasm. It carries out the reaction tRNA(Phe) + L-phenylalanine + ATP = L-phenylalanyl-tRNA(Phe) + AMP + diphosphate + H(+). This is Phenylalanine--tRNA ligase alpha subunit (FRS2) from Saccharomyces cerevisiae (strain ATCC 204508 / S288c) (Baker's yeast).